A 393-amino-acid chain; its full sequence is Elongation factor Tu (393 aa).

Positions 10-203 (KPHVNIGTIG…AVDSYIPEPV (194 aa)) constitute a tr-type G domain. The G1 stretch occupies residues 19 to 26 (GHVDHGKT). 19-26 (GHVDHGKT) contacts GTP. T26 provides a ligand contact to Mg(2+). The tract at residues 60–64 (GITIS) is G2. A G3 region spans residues 81–84 (DCPG). Residues 81-85 (DCPGH) and 136-139 (NKVD) each bind GTP. The G4 stretch occupies residues 136 to 139 (NKVD). Residues 173–175 (SAL) form a G5 region.

Belongs to the TRAFAC class translation factor GTPase superfamily. Classic translation factor GTPase family. EF-Tu/EF-1A subfamily. Monomer.

Its subcellular location is the cytoplasm. It catalyses the reaction GTP + H2O = GDP + phosphate + H(+). Its function is as follows. GTP hydrolase that promotes the GTP-dependent binding of aminoacyl-tRNA to the A-site of ribosomes during protein biosynthesis. This is Elongation factor Tu from Prosthecochloris aestuarii (strain DSM 271 / SK 413).